A 188-amino-acid chain; its full sequence is MINAQDIKNGTCIRMDGKLYFCIEFLHVKPGKGNTFMRTKLKDVVSGYVLERRFNIGEKLEDVRVERRPYQFLYKEGEDYIFMNQETFDQHPIAHDLINGVDFLLEGAVLDVVSDASTETVLYADMPIKVQMKVTYTEPGMKGDTATNTLKPATVESGATVRVPLFISEGETIEIDTRDGSYVGRVKA.

It belongs to the elongation factor P family.

It localises to the cytoplasm. Its pathway is protein biosynthesis; polypeptide chain elongation. Its function is as follows. Involved in peptide bond synthesis. Stimulates efficient translation and peptide-bond synthesis on native or reconstituted 70S ribosomes in vitro. Probably functions indirectly by altering the affinity of the ribosome for aminoacyl-tRNA, thus increasing their reactivity as acceptors for peptidyl transferase. The chain is Elongation factor P from Bacteroides thetaiotaomicron (strain ATCC 29148 / DSM 2079 / JCM 5827 / CCUG 10774 / NCTC 10582 / VPI-5482 / E50).